Here is a 443-residue protein sequence, read N- to C-terminus: Eukaryotic translation initiation factor 3 subunit E (443 aa).

The PCI domain maps to 249-417 (LDLFFNAGFI…GTVVMNHPPS (169 aa)).

The protein belongs to the eIF-3 subunit E family. Component of the eukaryotic translation initiation factor 3 (eIF-3) complex.

The protein localises to the cytoplasm. Component of the eukaryotic translation initiation factor 3 (eIF-3) complex, which is involved in protein synthesis of a specialized repertoire of mRNAs and, together with other initiation factors, stimulates binding of mRNA and methionyl-tRNAi to the 40S ribosome. The eIF-3 complex specifically targets and initiates translation of a subset of mRNAs involved in cell proliferation. The chain is Eukaryotic translation initiation factor 3 subunit E (int-6) from Neurospora crassa (strain ATCC 24698 / 74-OR23-1A / CBS 708.71 / DSM 1257 / FGSC 987).